The sequence spans 333 residues: MATLKEKLITPVAAGSTVPSNKITVVGVGQVGMACAISILGKGLCDELALVDVLEDKLKGEMMDLQHGSLFLQTHKIVADKDYAVTANSKIVVVTAGVRQQEGESRLNLVQRNVNVFKFIIPQIVKYSPNCTILVVSNPVDILTYVTWKLSGLPKHRVIGSGCNLDTARFRYLMAERLGIHPTSCHGWILGEHGDSSVAVWSGVNVAGVSLQELNPAMGTDKDSENWKEVHKQVVESAYEVIRLKGYTNWAIGLSVAELCETMLKNLYRVHSVSTLVKGTYGIENDVFLSLPCVLSASGLTSVINQKLKDDEVAQLKKSADTLWSIQKDLKDL.

Residues 29 to 57 and R99 contribute to the NAD(+) site; that span reads GQVG…LEDK. Positions 106, 138, and 169 each coordinate substrate. Residue N138 coordinates NAD(+). Catalysis depends on H193, which acts as the Proton acceptor. Substrate is bound at residue T248.

This sequence belongs to the LDH/MDH superfamily. LDH family. As to quaternary structure, homotetramer.

It is found in the cytoplasm. The enzyme catalyses (S)-lactate + NAD(+) = pyruvate + NADH + H(+). It functions in the pathway fermentation; pyruvate fermentation to lactate; (S)-lactate from pyruvate: step 1/1. Interconverts simultaneously and stereospecifically pyruvate and lactate with concomitant interconversion of NADH and NAD(+). This Gallus gallus (Chicken) protein is L-lactate dehydrogenase B chain (LDHB).